The chain runs to 348 residues: Sensor protein VraS (348 aa).

2 consecutive transmembrane segments (helical) span residues isoleucine 13 to isoleucine 33 and isoleucine 43 to valine 63. Residues arginine 150–lysine 341 form the Histidine kinase domain.

Its subcellular location is the cell membrane. The catalysed reaction is ATP + protein L-histidine = ADP + protein N-phospho-L-histidine.. In terms of biological role, member of the two-component regulatory system VraS/VraR involved in the control of the cell wall peptidoglycan biosynthesis. Probably activates VraR by phosphorylation. The protein is Sensor protein VraS (vraS) of Staphylococcus epidermidis (strain ATCC 35984 / DSM 28319 / BCRC 17069 / CCUG 31568 / BM 3577 / RP62A).